A 62-amino-acid chain; its full sequence is UPF0434 protein RHE_CH03977 (62 aa).

The protein belongs to the UPF0434 family.

In Rhizobium etli (strain ATCC 51251 / DSM 11541 / JCM 21823 / NBRC 15573 / CFN 42), this protein is UPF0434 protein RHE_CH03977.